Consider the following 219-residue polypeptide: Probable GTP-binding protein EngB (219 aa).

Residues 24 to 207 form the EngB-type G domain; the sequence is VQPEIAFAGR…HALIESWLRP (184 aa). GTP contacts are provided by residues 32-39, 59-63, 81-84, 148-151, and 185-188; these read GRSNAGKS, GRTQH, DLPG, TKCD, and LFSA. Residues S39 and T61 each coordinate Mg(2+).

This sequence belongs to the TRAFAC class TrmE-Era-EngA-EngB-Septin-like GTPase superfamily. EngB GTPase family. Requires Mg(2+) as cofactor.

Its function is as follows. Necessary for normal cell division and for the maintenance of normal septation. In Burkholderia thailandensis (strain ATCC 700388 / DSM 13276 / CCUG 48851 / CIP 106301 / E264), this protein is Probable GTP-binding protein EngB.